Reading from the N-terminus, the 195-residue chain is Elongation factor P (195 aa).

It belongs to the elongation factor P family.

The protein localises to the cytoplasm. It participates in protein biosynthesis; polypeptide chain elongation. Its function is as follows. Involved in peptide bond synthesis. Stimulates efficient translation and peptide-bond synthesis on native or reconstituted 70S ribosomes in vitro. Probably functions indirectly by altering the affinity of the ribosome for aminoacyl-tRNA, thus increasing their reactivity as acceptors for peptidyl transferase. The protein is Elongation factor P of Rhodopirellula baltica (strain DSM 10527 / NCIMB 13988 / SH1).